A 327-amino-acid chain; its full sequence is 2-methoxy-6-polyprenyl-1,4-benzoquinol methylase, mitochondrial (327 aa).

The N-terminal 42 residues, 1-42 (MAAPGSCALWSYCGRGWSRAMRGCQLLGLRSSWPGDLLSARL), are a transit peptide targeting the mitochondrion. Residues threonine 117, aspartate 171, and 199 to 200 (DA) contribute to the S-adenosyl-L-methionine site.

This sequence belongs to the class I-like SAM-binding methyltransferase superfamily. MenG/UbiE family. As to quaternary structure, component of a multi-subunit COQ enzyme complex, composed of at least COQ3, COQ4, COQ5, COQ6, COQ7 and COQ9. Interacts with PYURF; the interaction is direct, stabilizes COQ5 protein and associates PYURF with COQ enzyme complex. Widely expressed, with highest levels in liver, lung, placenta and skeletal muscle.

It localises to the mitochondrion inner membrane. It carries out the reaction 2-methoxy-6-(all-trans-decaprenyl)benzene-1,4-diol + S-adenosyl-L-methionine = 5-methoxy-2-methyl-3-(all-trans-decaprenyl)benzene-1,4-diol + S-adenosyl-L-homocysteine + H(+). Its pathway is cofactor biosynthesis; ubiquinone biosynthesis. Functionally, methyltransferase required for the conversion of 2-decaprenyl-6-methoxy-1,4-benzoquinol (DDMQH2) to 2-decaprenyl-3-methyl-6-methoxy-1,4-benzoquinol (DMQH2). The polypeptide is 2-methoxy-6-polyprenyl-1,4-benzoquinol methylase, mitochondrial (Homo sapiens (Human)).